A 208-amino-acid chain; its full sequence is Holliday junction resolvase RecU (208 aa).

A disordered region spans residues 1 to 30 (MNYPNGKPFNRNKSQVGRTHKGQTSKIDYG). 4 residues coordinate Mg(2+): T87, D89, E102, and Q121.

The protein belongs to the RecU family. Mg(2+) serves as cofactor.

The protein localises to the cytoplasm. It carries out the reaction Endonucleolytic cleavage at a junction such as a reciprocal single-stranded crossover between two homologous DNA duplexes (Holliday junction).. Endonuclease that resolves Holliday junction intermediates in genetic recombination. Cleaves mobile four-strand junctions by introducing symmetrical nicks in paired strands. Promotes annealing of linear ssDNA with homologous dsDNA. Required for DNA repair, homologous recombination and chromosome segregation. This chain is Holliday junction resolvase RecU, found in Staphylococcus saprophyticus subsp. saprophyticus (strain ATCC 15305 / DSM 20229 / NCIMB 8711 / NCTC 7292 / S-41).